A 452-amino-acid chain; its full sequence is Probable phosphoglucosamine mutase (452 aa).

Residue S96 is the Phosphoserine intermediate of the active site. S96, D235, D237, and D239 together coordinate Mg(2+). S96 is modified (phosphoserine).

Belongs to the phosphohexose mutase family. Mg(2+) is required as a cofactor. Activated by phosphorylation.

It catalyses the reaction alpha-D-glucosamine 1-phosphate = D-glucosamine 6-phosphate. In terms of biological role, catalyzes the conversion of glucosamine-6-phosphate to glucosamine-1-phosphate. This is Probable phosphoglucosamine mutase from Methanopyrus kandleri (strain AV19 / DSM 6324 / JCM 9639 / NBRC 100938).